The sequence spans 479 residues: ATP synthase subunit beta (479 aa).

158 to 165 (GGAGLGKT) serves as a coordination point for ATP.

The protein belongs to the ATPase alpha/beta chains family. As to quaternary structure, F-type ATPases have 2 components, CF(1) - the catalytic core - and CF(0) - the membrane proton channel. CF(1) has five subunits: alpha(3), beta(3), gamma(1), delta(1), epsilon(1). CF(0) has three main subunits: a(1), b(2) and c(9-12). The alpha and beta chains form an alternating ring which encloses part of the gamma chain. CF(1) is attached to CF(0) by a central stalk formed by the gamma and epsilon chains, while a peripheral stalk is formed by the delta and b chains.

The protein localises to the cell inner membrane. The catalysed reaction is ATP + H2O + 4 H(+)(in) = ADP + phosphate + 5 H(+)(out). Functionally, produces ATP from ADP in the presence of a proton gradient across the membrane. The catalytic sites are hosted primarily by the beta subunits. The polypeptide is ATP synthase subunit beta (Rhodopirellula baltica (strain DSM 10527 / NCIMB 13988 / SH1)).